A 306-amino-acid polypeptide reads, in one-letter code: Ribosomal RNA small subunit methyltransferase H (306 aa).

Residues 33-35 (GGY), Asp-51, Phe-82, Asp-96, and Gln-103 each bind S-adenosyl-L-methionine.

Belongs to the methyltransferase superfamily. RsmH family.

The protein localises to the cytoplasm. The catalysed reaction is cytidine(1402) in 16S rRNA + S-adenosyl-L-methionine = N(4)-methylcytidine(1402) in 16S rRNA + S-adenosyl-L-homocysteine + H(+). Its function is as follows. Specifically methylates the N4 position of cytidine in position 1402 (C1402) of 16S rRNA. In Rickettsia akari (strain Hartford), this protein is Ribosomal RNA small subunit methyltransferase H.